A 94-amino-acid chain; its full sequence is Transcription factor PRE6 (94 aa).

Positions 1–20 are disordered; that stretch reads MSSRRSSRSRQSGSSRISDD. A bHLH domain is found at 6-60; sequence SSRSRQSGSSRISDDQISDLVSKLQHLIPELRRRRSDKVSASKVLQETCNYIRNL.

The protein belongs to the bHLH protein family. Interacts with HFR1.

The protein localises to the cytoplasm. The protein resides in the nucleus. Its function is as follows. Atypical and probable non DNA-binding bHLH transcription factor that regulates light-mediated responses in day light conditions by binding and inhibiting the activity of the bHLH transcription factor HFR1, a critical regulator of light signaling and shade avoidance. Forms non-functional heterodimers with HFR1, causing liberation and activation of PIF4 from the transcriptionally inactive HFR1-PIF4 complex. The protein is Transcription factor PRE6 (PRE6) of Arabidopsis thaliana (Mouse-ear cress).